The sequence spans 1179 residues: Integrin alpha-E (1179 aa).

Positions 1-18 (MWLFHTLLCIASLALLAA) are cleaved as a signal peptide. Residues 19-1124 (FNVDVARPWL…VFLKDEKYHS (1106 aa)) lie on the Extracellular side of the membrane. FG-GAP repeat units follow at residues 22 to 79 (DVAR…EILC) and 80 to 138 (HPVE…PQAQ). N49 is a glycosylation site (N-linked (GlcNAc...) asparagine). 2 disulfide bridges follow: C70-C79 and C126-C159. The interval 145-199 (ENLLDPDARVDTGDCYSNKEGGGEDDVNTARQRRALEKEEEEDKEEEEDEEEEEA) is X-domain (extra domain). A disordered region spans residues 158 to 200 (DCYSNKEGGGEDDVNTARQRRALEKEEEEDKEEEEDEEEEEAG). Residues 182-200 (KEEEEDKEEEEDEEEEEAG) are compositionally biased toward acidic residues. In terms of domain architecture, VWFA spans 200 to 389 (GTEIAIILDG…SKLRYNIISM (190 aa)). N271 and N321 each carry an N-linked (GlcNAc...) asparagine glycan. Residues 390–442 (EGTVGDALHYQLAQIGFSAQILDERQVLLGAVGAFDWSGGALLYDTRSRRGRF) form an FG-GAP 3 repeat. Residue N444 is glycosylated (N-linked (GlcNAc...) asparagine). FG-GAP repeat units follow at residues 447–499 (AAAA…GREA), 500–560 (SFLP…DGSF), 563–627 (ARIL…GLSA), and 631–691 (QRIR…FTPS). Positions 522, 524, 526, 530, 586, 588, 590, 594, 654, 656, 658, and 662 each coordinate Ca(2+). C706 and C762 form a disulfide bridge. N-linked (GlcNAc...) asparagine glycans are attached at residues N726 and N782. A disulfide bridge links C823 with C829. N857 carries an N-linked (GlcNAc...) asparagine glycan. Cysteines 893 and 907 form a disulfide. Residues N934 and N954 are each glycosylated (N-linked (GlcNAc...) asparagine). 2 disulfides stabilise this stretch: C1008-C1033 and C1041-C1057. Residues N1065 and N1096 are each glycosylated (N-linked (GlcNAc...) asparagine). The chain crosses the membrane as a helical span at residues 1125–1147 (LPIIIKGSVGGLLVLIVILVILF). Residues 1148 to 1179 (KCGFFKRKYQQLNLESIRKAQLKSENLLEEEN) are Cytoplasmic-facing. The GFFKR motif motif lies at 1150 to 1154 (GFFKR).

This sequence belongs to the integrin alpha chain family. In terms of assembly, heterodimer of an alpha and a beta subunit. The alpha subunit is composed of a heavy and a light chains linked by a disulfide bond. Alpha-E associates with beta-7. Expressed on a subclass of T-lymphocytes known as intra-epithelial lymphocytes which are located between mucosal epithelial cells.

The protein localises to the membrane. Functionally, integrin alpha-E/beta-7 is a receptor for E-cadherin. It mediates adhesion of intra-epithelial T-lymphocytes to epithelial cell monolayers. This chain is Integrin alpha-E (ITGAE), found in Homo sapiens (Human).